A 508-amino-acid polypeptide reads, in one-letter code: Light-independent protochlorophyllide reductase subunit B (508 aa).

Position 36 (Asp-36) interacts with [4Fe-4S] cluster. Asp-294 (proton donor) is an active-site residue. 429 to 430 provides a ligand contact to substrate; it reads GM.

This sequence belongs to the ChlB/BchB/BchZ family. Protochlorophyllide reductase is composed of three subunits; ChlL, ChlN and ChlB. Forms a heterotetramer of two ChlB and two ChlN subunits. The cofactor is [4Fe-4S] cluster.

The enzyme catalyses chlorophyllide a + oxidized 2[4Fe-4S]-[ferredoxin] + 2 ADP + 2 phosphate = protochlorophyllide a + reduced 2[4Fe-4S]-[ferredoxin] + 2 ATP + 2 H2O. It functions in the pathway porphyrin-containing compound metabolism; chlorophyll biosynthesis (light-independent). In terms of biological role, component of the dark-operative protochlorophyllide reductase (DPOR) that uses Mg-ATP and reduced ferredoxin to reduce ring D of protochlorophyllide (Pchlide) to form chlorophyllide a (Chlide). This reaction is light-independent. The NB-protein (ChlN-ChlB) is the catalytic component of the complex. The chain is Light-independent protochlorophyllide reductase subunit B from Synechocystis sp. (strain ATCC 27184 / PCC 6803 / Kazusa).